The primary structure comprises 256 residues: Triosephosphate isomerase (256 aa).

A substrate-binding site is contributed by Asn9–Lys11. His96 acts as the Electrophile in catalysis. Glu168 (proton acceptor) is an active-site residue. Substrate is bound by residues Ser213 and Gly234–Gly235.

This sequence belongs to the triosephosphate isomerase family. In terms of assembly, homodimer.

Its subcellular location is the cytoplasm. It carries out the reaction D-glyceraldehyde 3-phosphate = dihydroxyacetone phosphate. It functions in the pathway carbohydrate biosynthesis; gluconeogenesis. The protein operates within carbohydrate degradation; glycolysis; D-glyceraldehyde 3-phosphate from glycerone phosphate: step 1/1. Functionally, involved in the gluconeogenesis. Catalyzes stereospecifically the conversion of dihydroxyacetone phosphate (DHAP) to D-glyceraldehyde-3-phosphate (G3P). This is Triosephosphate isomerase from Baumannia cicadellinicola subsp. Homalodisca coagulata.